The primary structure comprises 635 residues: Probable Xaa-Pro aminopeptidase P (635 aa).

Mn(2+) is bound by residues aspartate 432, aspartate 443, glutamate 541, and glutamate 555.

Belongs to the peptidase M24B family. It depends on Mn(2+) as a cofactor.

The catalysed reaction is Release of any N-terminal amino acid, including proline, that is linked to proline, even from a dipeptide or tripeptide.. Its function is as follows. Catalyzes the removal of a penultimate prolyl residue from the N-termini of peptides. This Arthroderma gypseum (strain ATCC MYA-4604 / CBS 118893) (Microsporum gypseum) protein is Probable Xaa-Pro aminopeptidase P (AMPP).